Here is a 320-residue protein sequence, read N- to C-terminus: Protease HtpX homolog (320 aa).

The next 2 membrane-spanning stretches (helical) occupy residues 6-26 and 28-48; these read TAML…LIGG and AGMM…YWNS. His130 is a Zn(2+) binding site. Glu131 is an active-site residue. His134 contributes to the Zn(2+) binding site. 2 helical membrane passes run 145–165 and 173–193; these read ITAT…FFGG and PLGF…AMLV. Glu202 contributes to the Zn(2+) binding site. A disordered region spans residues 283-320; the sequence is MNVSTSPARAANPSRKSRSVPDTGLGRGGSQPPKGPWS.

It belongs to the peptidase M48B family. Zn(2+) is required as a cofactor.

The protein resides in the cell inner membrane. The chain is Protease HtpX homolog from Rhizobium johnstonii (strain DSM 114642 / LMG 32736 / 3841) (Rhizobium leguminosarum bv. viciae).